The following is a 286-amino-acid chain: tRNA(Ile)-lysidine synthase (286 aa).

Residue 7-12 (SGGPDS) participates in ATP binding.

The protein belongs to the tRNA(Ile)-lysidine synthase family.

Its subcellular location is the cytoplasm. It carries out the reaction cytidine(34) in tRNA(Ile2) + L-lysine + ATP = lysidine(34) in tRNA(Ile2) + AMP + diphosphate + H(+). In terms of biological role, ligates lysine onto the cytidine present at position 34 of the AUA codon-specific tRNA(Ile) that contains the anticodon CAU, in an ATP-dependent manner. Cytidine is converted to lysidine, thus changing the amino acid specificity of the tRNA from methionine to isoleucine. This Mycoplasmopsis pulmonis (strain UAB CTIP) (Mycoplasma pulmonis) protein is tRNA(Ile)-lysidine synthase.